The chain runs to 301 residues: Putative S-adenosyl-L-methionine-dependent methyltransferase MUL_0450 (301 aa).

Residues aspartate 127 and aspartate 156 to leucine 157 each bind S-adenosyl-L-methionine.

Belongs to the UPF0677 family.

Functionally, exhibits S-adenosyl-L-methionine-dependent methyltransferase activity. This is Putative S-adenosyl-L-methionine-dependent methyltransferase MUL_0450 from Mycobacterium ulcerans (strain Agy99).